The chain runs to 21 residues: Fibrinogen beta chain (21 aa).

Glutamine 1 carries the post-translational modification Pyrrolidone carboxylic acid. Residues 1-11 (QFPTDYDEGED) show a composition bias toward acidic residues. The disordered stretch occupies residues 1 to 21 (QFPTDYDEGEDDRPKSGLGAR). A glycan (O-linked (GalNAc...) threonine) is linked at threonine 4. Tyrosine 6 is subject to Sulfotyrosine.

As to quaternary structure, heterohexamer; disulfide linked. Contains 2 sets of 3 non-identical chains (alpha, beta and gamma). The 2 heterotrimers are in head to head conformation with the N-termini in a small central domain. In terms of processing, conversion of fibrinogen to fibrin is triggered by thrombin, which cleaves fibrinopeptides A and B from alpha and beta chains, and thus exposes the N-terminal polymerization sites responsible for the formation of the soft clot.

The protein localises to the secreted. Cleaved by the protease thrombin to yield monomers which, together with fibrinogen alpha (FGA) and fibrinogen gamma (FGG), polymerize to form an insoluble fibrin matrix. Fibrin has a major function in hemostasis as one of the primary components of blood clots. In addition, functions during the early stages of wound repair to stabilize the lesion and guide cell migration during re-epithelialization. Was originally thought to be essential for platelet aggregation, based on in vitro studies using anticoagulated blood. However subsequent studies have shown that it is not absolutely required for thrombus formation in vivo. Enhances expression of SELP in activated platelets. Maternal fibrinogen is essential for successful pregnancy. Fibrin deposition is also associated with infection, where it protects against IFNG-mediated hemorrhage. May also facilitate the antibacterial immune response via both innate and T-cell mediated pathways. The protein is Fibrinogen beta chain (FGB) of Syncerus caffer (African buffalo).